We begin with the raw amino-acid sequence, 401 residues long: Argininosuccinate synthase (401 aa).

8–16 contributes to the ATP binding site; that stretch reads AYSGGLDTS. The L-citrulline site is built by tyrosine 86 and serine 91. ATP is bound at residue glycine 116. 3 residues coordinate L-aspartate: threonine 118, asparagine 122, and aspartate 123. L-citrulline is bound at residue asparagine 122. Residues arginine 126, serine 175, serine 184, glutamate 260, and tyrosine 272 each coordinate L-citrulline.

It belongs to the argininosuccinate synthase family. Type 1 subfamily. Homotetramer.

It localises to the cytoplasm. The enzyme catalyses L-citrulline + L-aspartate + ATP = 2-(N(omega)-L-arginino)succinate + AMP + diphosphate + H(+). It functions in the pathway amino-acid biosynthesis; L-arginine biosynthesis; L-arginine from L-ornithine and carbamoyl phosphate: step 2/3. The protein is Argininosuccinate synthase of Clostridium kluyveri (strain ATCC 8527 / DSM 555 / NBRC 12016 / NCIMB 10680 / K1).